Consider the following 712-residue polypeptide: Methylmalonyl-CoA mutase (712 aa).

Substrate contacts are provided by residues 73–77, 183–185, arginine 195, lysine 222, histidine 232, and 271–273; these read TVRQY, TIQ, and RLS. Residues 580 to 712 enclose the B12-binding domain; it reads KPKIMVAKLG…DLIEGKRRNV (133 aa). Histidine 593 is an adenosylcob(III)alamin binding site.

Belongs to the methylmalonyl-CoA mutase family. In terms of assembly, homodimer. It depends on adenosylcob(III)alamin as a cofactor. A monovalent cation is required as a cofactor.

It catalyses the reaction (R)-methylmalonyl-CoA = succinyl-CoA. Its pathway is metabolic intermediate metabolism; propanoyl-CoA degradation; succinyl-CoA from propanoyl-CoA: step 3/3. Functionally, radical enzyme that catalyzes the transformation of methylmalonyl-CoA to succinyl-CoA. Is required for growth on the polyhydroxyalkanoate degradation pathway intermediates 3-hydroxybutyrate and acetoacetate as sole carbon source. This is Methylmalonyl-CoA mutase from Rhizobium meliloti (strain 1021) (Ensifer meliloti).